Here is a 296-residue protein sequence, read N- to C-terminus: UBX domain-containing protein 1-A (296 aa).

The region spanning 1-42 (MAECSTLESLIEMGFSSTRAEKALTATGNQGIEPAMDWLVEH) is the UBA domain. A disordered region spans residues 43 to 216 (EDDPDIDEPS…VQEPPTKKEY (174 aa)). Residues 61–75 (TDTADTTDTTDTTDT) show a composition bias toward low complexity. 3 stretches are compositionally biased toward basic and acidic residues: residues 86–100 (PLTEEEKEKQTKRMM), 107–123 (QNEREEREKKERIEQEK), and 138–178 (KMQE…DRAR). A coiled-coil region spans residues 87–177 (LTEEEKEKQT…KIARDKADRA (91 aa)). Positions 191-206 (PAETSIPATTPSPSSP) are enriched in low complexity. The UBX domain maps to 214–293 (KEYDQCRIQV…GLVPTAVLIV (80 aa)).

The protein localises to the cytoplasm. Component of a complex required to couple deglycosylation and proteasome-mediated degradation of misfolded proteins in the endoplasmic reticulum that are retrotranslocated in the cytosol. Involved in ubiquitin-proteasome systems. The protein is UBX domain-containing protein 1-A (ubxn1-a) of Xenopus laevis (African clawed frog).